Consider the following 495-residue polypeptide: Nitrogen fixation regulatory protein (495 aa).

A PAS 1 domain is found at 23–93; that stretch reads HPGLFFTMVE…QEMWQTLLQR (71 aa). A PAC domain is found at 94–148; it reads QPWRGQLINQARDGGLYLVDIDITPVLNPQGELEHYLAMQRDISVSYTLEQRLRN. The PAS 2; truncated domain occupies 151-174; that stretch reads TLMEAVLNNIPAAVVVVDEQDRVV.

It depends on FAD as a cofactor.

In terms of biological role, required for the inhibition of NifA activity in response to oxygen and low level of fixed nitrogen. The polypeptide is Nitrogen fixation regulatory protein (nifL) (Klebsiella pneumoniae).